The sequence spans 166 residues: uncharacterized protein (166 aa).

The disordered stretch occupies residues 28–55 (SRQVHPPWPVPCKSKLQEQDSSESKESK). Residues 42–55 (KLQEQDSSESKESK) show a composition bias toward basic and acidic residues. Residues 67 to 163 (QNAMLYIENN…NYTPKQFKRT (97 aa)) enclose the HTH araC/xylS-type domain. DNA-binding regions (H-T-H motif) lie at residues 84 to 105 (DTVA…KLAT) and 130 to 153 (VTET…KKRT).

This is an uncharacterized protein from Pseudoalteromonas carrageenovora (Alteromonas carrageenovora).